A 1345-amino-acid polypeptide reads, in one-letter code: Probable membrane antigen 75 (1345 aa).

The protein localises to the virion tegument. In Equine herpesvirus 2 (strain 86/87) (EHV-2), this protein is Probable membrane antigen 75 (75).